Here is a 217-residue protein sequence, read N- to C-terminus: 3,4-dihydroxy-2-butanone 4-phosphate synthase (217 aa).

Residues R37–E38, D42, R150–T154, and E174 contribute to the D-ribulose 5-phosphate site. Mg(2+) is bound at residue E38. H153 is a binding site for Mg(2+).

The protein belongs to the DHBP synthase family. In terms of assembly, homodimer. Mg(2+) is required as a cofactor. The cofactor is Mn(2+).

It carries out the reaction D-ribulose 5-phosphate = (2S)-2-hydroxy-3-oxobutyl phosphate + formate + H(+). It participates in cofactor biosynthesis; riboflavin biosynthesis; 2-hydroxy-3-oxobutyl phosphate from D-ribulose 5-phosphate: step 1/1. Catalyzes the conversion of D-ribulose 5-phosphate to formate and 3,4-dihydroxy-2-butanone 4-phosphate. This is 3,4-dihydroxy-2-butanone 4-phosphate synthase from Klebsiella pneumoniae (strain 342).